The chain runs to 202 residues: Peptide deformylase (202 aa).

The disordered stretch occupies residues 1-24; sequence MAGSFAQLAKNAEKKKPSISVSKE. Fe cation-binding residues include C121 and H163. E164 is a catalytic residue. H167 contacts Fe cation.

The protein belongs to the polypeptide deformylase family. It depends on Fe(2+) as a cofactor.

The enzyme catalyses N-terminal N-formyl-L-methionyl-[peptide] + H2O = N-terminal L-methionyl-[peptide] + formate. In terms of biological role, removes the formyl group from the N-terminal Met of newly synthesized proteins. Requires at least a dipeptide for an efficient rate of reaction. N-terminal L-methionine is a prerequisite for activity but the enzyme has broad specificity at other positions. The protein is Peptide deformylase of Prochlorococcus marinus (strain NATL1A).